The following is a 626-amino-acid chain: Kinesin-like protein Klp59C (626 aa).

Residues 1–183 (MDKLSIEQKI…VRSGTTNERI (183 aa)) form a globular region. Positions 68–155 (CSGGNAASAN…GKNEDPGNPN (88 aa)) are disordered. The span at 72–96 (NAASANQTASISPRSMKQRIATGSL) shows a compositional bias: polar residues. The segment covering 101 to 112 (ATAPPRQQTAPP) has biased composition (low complexity). Basic and acidic residues predominate over residues 113 to 150 (VREDEVVHQAERMRKERERRREAQARTRLDREQGKNED). The stretch at 115–150 (EDEVVHQAERMRKERERRREAQARTRLDREQGKNED) forms a coiled coil. The 335-residue stretch at 187–521 (QIMVCVRKRP…LRYADRVKEL (335 aa)) folds into the Kinesin motor domain. 277–284 (GQTGSGKT) serves as a coordination point for ATP. The tract at residues 557-608 (ASSTSMPGGGNQAQQHTNTANDLNRSQKPTSKPTYPTSGQQLVQRKGSSQRE) is disordered.

The protein belongs to the TRAFAC class myosin-kinesin ATPase superfamily. Kinesin family. MCAK/KIF2 subfamily.

It localises to the chromosome. It is found in the centromere. Its subcellular location is the kinetochore. The protein localises to the cytoplasm. The protein resides in the cytoskeleton. It localises to the spindle pole. In terms of biological role, required during anaphase to drive sister chromatid separation to actively depolymerize kinetochore microtubules at their kinetochore-associated plus ends, thereby contributing to chromatid mobility through a 'Pac-man' mechanism. This is Kinesin-like protein Klp59C (Klp59C) from Drosophila melanogaster (Fruit fly).